The chain runs to 120 residues: Large ribosomal subunit protein bL20 (120 aa).

Belongs to the bacterial ribosomal protein bL20 family.

Functionally, binds directly to 23S ribosomal RNA and is necessary for the in vitro assembly process of the 50S ribosomal subunit. It is not involved in the protein synthesizing functions of that subunit. The chain is Large ribosomal subunit protein bL20 from Cereibacter sphaeroides (strain ATCC 17025 / ATH 2.4.3) (Rhodobacter sphaeroides).